Reading from the N-terminus, the 370-residue chain is uncharacterized protein (370 aa).

The a divalent metal cation site is built by D152, H154, D184, N215, H306, and H308.

Belongs to the metallophosphoesterase superfamily. Requires a divalent metal cation as cofactor.

This is an uncharacterized protein from Helicobacter pylori (strain J99 / ATCC 700824) (Campylobacter pylori J99).